The chain runs to 87 residues: MGCDDKCGCAVPCPGGTGCRCASSARSGGGDHTTCSCGDHCGCNPCRCGRESQPTGRENRRAGCSCGDSCTCASCGSTTTTAPAATT.

This sequence belongs to the metallothionein superfamily. Type 15 family. In terms of tissue distribution, expressed in developing seeds.

In terms of biological role, metallothioneins have a high content of cysteine residues that bind various heavy metals. This is Class II metallothionein-like protein 1A (MT21A) from Oryza sativa subsp. japonica (Rice).